The chain runs to 902 residues: HTH-type transcriptional regulator MalT (902 aa).

39-46 provides a ligand contact to ATP; sequence SPAGYGKT. In terms of domain architecture, HTH luxR-type spans 832–897; the sequence is ELVRTSPLTQ…EAVQTAEQLL (66 aa). The segment at residues 856 to 875 is a DNA-binding region (H-T-H motif); it reads NEQIAHELDVAGTTIKTHIR.

Belongs to the MalT family. As to quaternary structure, monomer in solution. Oligomerizes to an active state in the presence of the positive effectors ATP and maltotriose.

Its activity is regulated as follows. Activated by ATP and maltotriose, which are both required for DNA binding. Its function is as follows. Positively regulates the transcription of the maltose regulon whose gene products are responsible for uptake and catabolism of malto-oligosaccharides. Specifically binds to the promoter region of its target genes, recognizing a short DNA motif called the MalT box. This is HTH-type transcriptional regulator MalT from Vibrio cholerae serotype O1 (strain ATCC 39315 / El Tor Inaba N16961).